A 164-amino-acid chain; its full sequence is MLELDLQIATEAPAPTEAEFRQWCELALRQRTADSEMTIRLVDEDEGRELNHTWRHKDYATNVLSFPAEVPDEFLDIPLLGDLVICVAVVEREATEQGKELKAHWAHLVIHGCLHLLGYDHIDDEEAEEMEALERELLAELGYPDPYADDETETSPTVTTKDSE.

His-111, His-115, and His-121 together coordinate Zn(2+). A disordered region spans residues 142–164 (GYPDPYADDETETSPTVTTKDSE). Over residues 154 to 164 (TSPTVTTKDSE) the composition is skewed to polar residues.

The protein belongs to the endoribonuclease YbeY family. Requires Zn(2+) as cofactor.

It is found in the cytoplasm. Single strand-specific metallo-endoribonuclease involved in late-stage 70S ribosome quality control and in maturation of the 3' terminus of the 16S rRNA. This Pseudomonas fluorescens (strain Pf0-1) protein is Endoribonuclease YbeY.